We begin with the raw amino-acid sequence, 783 residues long: MPGPPATAPPPEPIERPPTPPPPPPEDSAAPPPPPDMSAPPPPPQDELPPAPEPKKKKLGWGSKRPAAAPLSVEELVRKKREADAAAAKPKFLSKKEREKIALEKRAKEVEQSRRKTSTNGASDTASVRSESATPNGVDRTASIPTGPRAMRTSEAPPPPRPRHDSSSNGNGNSNSNSNSNGTVDEDEAAAQAALVKQRYMGAEMTSSFSAKKKRKRTTDRKFNFEWNAEEDTSRDYNPLYAQRHEANFFGRGRLAGFGDDVADGVARKYAAALEDRDREAGSVRAREILEMERRRREESTRNQLDKHWSEKKLEHMRERDWRIFKEDFNIATKGGSVPNPMRSWAESGLPSRLLDLVHRVGYKDPTPIQRAAIPIAMQSRDLIGVAVTGSGKTAAFLLPLLVYIAELPRIDEFEWRKNDGPYAIVLAPTRELAQQIEIEAKKFTIPLGFTVVSIVGGHSLEEQAYSLRNGAEIIIATPGRLVDCIERRLLVLSQCCYVIMDEADRMIDLGFEEPVNKILDALPVSNEKPDSDAAENAAAMSQLHHAGGGRDTRYRQTMMYTATMPTAVERIARKYLRRPAIVTIGSAGEAVDTVEQRVELIAGEDKRKKRLGDILSSGEFRPPIIVFVNIKRNCDAIAREIKQWGFSSVTLHGSKTQEQREAALASVRNGSTDVLVATDLAGRGIDVPDVSLVVNFNMATSIESYTHRIGRTGRAGKSGVAITFLGNEDADVMYDLKQMLIKSPISRVPDELRKHEAAQQKPTRGFSKKNDESSAFGGKGGW.

The segment covering 1-52 (MPGPPATAPPPEPIERPPTPPPPPPEDSAAPPPPPDMSAPPPPPQDELPPAP) has biased composition (pro residues). Positions 1–193 (MPGPPATAPP…VDEDEAAAQA (193 aa)) are disordered. 2 stretches are compositionally biased toward basic and acidic residues: residues 75–84 (ELVRKKREAD) and 94–114 (SKKE…EQSR). Positions 118 to 135 (STNGASDTASVRSESATP) are enriched in polar residues. The segment covering 167-182 (SSNGNGNSNSNSNSNG) has biased composition (low complexity). Residues 343-371 (RSWAESGLPSRLLDLVHRVGYKDPTPIQR) carry the Q motif motif. In terms of domain architecture, Helicase ATP-binding spans 374–583 (IPIAMQSRDL…RKYLRRPAIV (210 aa)). 387–394 (AVTGSGKT) lines the ATP pocket. Residues 502 to 505 (DEAD) carry the DEAD box motif. A Helicase C-terminal domain is found at 594–757 (TVEQRVELIA…RVPDELRKHE (164 aa)). A disordered region spans residues 752–783 (ELRKHEAAQQKPTRGFSKKNDESSAFGGKGGW).

Belongs to the DEAD box helicase family. DDX23/PRP28 subfamily. Component of the U5 snRNP complex.

The protein localises to the cytoplasm. It localises to the nucleus. It carries out the reaction ATP + H2O = ADP + phosphate + H(+). Its function is as follows. ATP-dependent RNA helicase involved in mRNA splicing. May destabilize the U1/5'-splice site duplex to permit an effective competition for the 5'-splice site by the U6 snRNA, resulting in the switch between U1 and U6 at the 5'-splice site. May also act to unwind the U4/U6 base-pairing interaction in the U4/U6/U5 snRNP, facilitating the first covalent step of splicing. The sequence is that of Pre-mRNA-splicing ATP-dependent RNA helicase prp28 (prp28) from Aspergillus terreus (strain NIH 2624 / FGSC A1156).